The chain runs to 269 residues: Lipid II flippase Amj (269 aa).

The next 7 membrane-spanning stretches (helical) occupy residues 1 to 21, 31 to 51, 84 to 104, 105 to 125, 161 to 181, 192 to 212, and 245 to 265; these read MHVI…IHSI, SGAR…MVIV, FLIF…PSFV, ALFS…FQVF, LFVI…SALY, TAVM…AIFV, and VAGT…IAWL.

The protein belongs to the Amj family.

The protein localises to the cell membrane. It functions in the pathway cell wall biogenesis; peptidoglycan biosynthesis. Its function is as follows. Involved in peptidoglycan biosynthesis. Transports lipid-linked peptidoglycan precursors from the inner to the outer leaflet of the cytoplasmic membrane. May serve as a defense mechanism against naturally occurring MurJ antagonists. The protein is Lipid II flippase Amj of Bacillus subtilis (strain 168).